The following is a 509-amino-acid chain: Maturase K (509 aa).

The protein belongs to the intron maturase 2 family. MatK subfamily.

Its subcellular location is the plastid. It is found in the chloroplast. Its function is as follows. Usually encoded in the trnK tRNA gene intron. Probably assists in splicing its own and other chloroplast group II introns. The polypeptide is Maturase K (Nicotiana glauca (Glaucous tobacco)).